The primary structure comprises 1194 residues: ATP-dependent RNA helicase DHX30 (1194 aa).

Positions 1-10 (MFTLDSFRKD) are enriched in basic and acidic residues. Residues 1 to 27 (MFTLDSFRKDRTQHRQRQCKLPPPRLP) form a disordered region. Position 6 is a phosphoserine (serine 6). The DRBM domain maps to 53 to 121 (PKNLLNSVIG…QAAAAACQLF (69 aa)). The segment at 153–200 (WWRPEPTMPPTSWRQLNPENIRPAGTGGLSRSLGREEEEDEEEELEEG) is disordered. The span at 188–200 (EEEEDEEEELEEG) shows a compositional bias: acidic residues. Phosphoserine occurs at positions 226 and 380. One can recognise a Helicase ATP-binding domain in the interval 444–612 (LSAIEQHPVV…FGGCPVIKVP (169 aa)). Residue 457–464 (GDTGCGKT) coordinates ATP. Residues 559–562 (DEVH) carry the DEAH box motif. A Helicase C-terminal domain is found at 654–827 (LVTDLVLHID…NLVLQAKIHM (174 aa)).

The protein belongs to the DEAD box helicase family. DEAH subfamily. In terms of assembly, identified in a complex with TFAM and SSBP1. Interacts (via N-terminus) with ZC3HAV1 (via N-terminal domain) in an RNA-independent manner. Found in a complex with GRSF1, DDX28, FASTKD2 and FASTKD5.

The protein localises to the cytoplasm. Its subcellular location is the mitochondrion. It localises to the mitochondrion matrix. It is found in the mitochondrion nucleoid. The enzyme catalyses ATP + H2O = ADP + phosphate + H(+). Functionally, RNA-dependent helicase. Plays an important role in the assembly of the mitochondrial large ribosomal subunit. Associates with mitochondrial DNA. Required for optimal function of the zinc-finger antiviral protein ZC3HAV1. Involved in nervous system development and differentiation through its involvement in the up-regulation of a number of genes which are required for neurogenesis, including GSC, NCAM1, neurogenin, and NEUROD. This Rattus norvegicus (Rat) protein is ATP-dependent RNA helicase DHX30 (Dhx30).